The sequence spans 123 residues: WAP four-disulfide core domain protein 5 (123 aa).

Positions 1-24 (MRTQSLLLLGALLAVGSQLPAVFG) are cleaved as a signal peptide. 2 WAP domains span residues 27–74 (KGEK…VPRV) and 75–121 (SVKL…RDPA). 8 disulfide bridges follow: C34-C62, C41-C66, C49-C61, C55-C70, C81-C109, C88-C113, C96-C108, and C102-C117.

It localises to the secreted. Putative acid-stable proteinase inhibitor. This is WAP four-disulfide core domain protein 5 (WFDC5) from Gorilla gorilla gorilla (Western lowland gorilla).